The following is a 542-amino-acid chain: Chaperonin GroEL 2 (542 aa).

Residues 29-32, 86-90, glycine 413, 477-479, and aspartate 493 each bind ATP; these read TLGP, DGTTT, and NAA.

Belongs to the chaperonin (HSP60) family. Forms a cylinder of 14 subunits composed of two heptameric rings stacked back-to-back. Interacts with the co-chaperonin GroES.

It is found in the cytoplasm. The catalysed reaction is ATP + H2O + a folded polypeptide = ADP + phosphate + an unfolded polypeptide.. Its function is as follows. Together with its co-chaperonin GroES, plays an essential role in assisting protein folding. The GroEL-GroES system forms a nano-cage that allows encapsulation of the non-native substrate proteins and provides a physical environment optimized to promote and accelerate protein folding. The sequence is that of Chaperonin GroEL 2 from Kineococcus radiotolerans (strain ATCC BAA-149 / DSM 14245 / SRS30216).